A 149-amino-acid chain; its full sequence is Putative pre-16S rRNA nuclease (149 aa).

It belongs to the YqgF nuclease family.

The protein localises to the cytoplasm. Functionally, could be a nuclease involved in processing of the 5'-end of pre-16S rRNA. The chain is Putative pre-16S rRNA nuclease from Burkholderia lata (strain ATCC 17760 / DSM 23089 / LMG 22485 / NCIMB 9086 / R18194 / 383).